A 32-amino-acid polypeptide reads, in one-letter code: Conotoxin pr6d (32 aa).

Residue Pro5 is modified to 4-hydroxyproline. 3 cysteine pairs are disulfide-bonded: Cys7/Cys20, Cys14/Cys25, and Cys19/Cys30.

Expressed by the venom duct.

Its subcellular location is the secreted. This chain is Conotoxin pr6d, found in Conus parius (Cone snail).